The primary structure comprises 352 residues: Probable RNA methyltransferase Mpe_A3613 (352 aa).

The active-site Proton acceptor is Glu-88. Residues 91–317 (LLPRDGLCVS…TKLRRSAGQD (227 aa)) enclose the Radical SAM core domain. Residues Cys-98 and Cys-322 are joined by a disulfide bond. [4Fe-4S] cluster is bound by residues Cys-105, Cys-109, and Cys-112. S-adenosyl-L-methionine contacts are provided by residues 150 to 151 (GE), Ser-180, 203 to 205 (SLH), and Asn-279. Cys-322 acts as the S-methylcysteine intermediate in catalysis.

It belongs to the radical SAM superfamily. RlmN family. [4Fe-4S] cluster serves as cofactor.

It localises to the cytoplasm. This Methylibium petroleiphilum (strain ATCC BAA-1232 / LMG 22953 / PM1) protein is Probable RNA methyltransferase Mpe_A3613.